The chain runs to 167 residues: Interferon gamma (167 aa).

The first 23 residues, Met1–Cys23, serve as a signal peptide directing secretion. Gln24 bears the Pyrrolidone carboxylic acid mark. N-linked (GlcNAc...) asparagine glycosylation is found at Asn39 and Asn105. A disordered region spans residues Ser148–Ile167. The span at Asn149–Ile167 shows a compositional bias: basic residues.

Belongs to the type II (or gamma) interferon family. Homodimer. Interacts with IFNGR1 (via extracellular domain); this interaction promotes IFNGR1 dimerization. In terms of tissue distribution, released primarily from activated T lymphocytes.

The protein resides in the secreted. Its function is as follows. Type II interferon produced by immune cells such as T-cells and NK cells that plays crucial roles in antimicrobial, antiviral, and antitumor responses by activating effector immune cells and enhancing antigen presentation. Primarily signals through the JAK-STAT pathway after interaction with its receptor IFNGR1 to affect gene regulation. Upon IFNG binding, IFNGR1 intracellular domain opens out to allow association of downstream signaling components JAK2, JAK1 and STAT1, leading to STAT1 activation, nuclear translocation and transcription of IFNG-regulated genes. Many of the induced genes are transcription factors such as IRF1 that are able to further drive regulation of a next wave of transcription. Plays a role in class I antigen presentation pathway by inducing a replacement of catalytic proteasome subunits with immunoproteasome subunits. In turn, increases the quantity, quality, and repertoire of peptides for class I MHC loading. Increases the efficiency of peptide generation also by inducing the expression of activator PA28 that associates with the proteasome and alters its proteolytic cleavage preference. Up-regulates as well MHC II complexes on the cell surface by promoting expression of several key molecules such as cathepsins B/CTSB, H/CTSH, and L/CTSL. Participates in the regulation of hematopoietic stem cells during development and under homeostatic conditions by affecting their development, quiescence, and differentiation. This chain is Interferon gamma (IFNG), found in Dasypus novemcinctus (Nine-banded armadillo).